The following is a 414-amino-acid chain: Histidine--tRNA ligase (414 aa).

It belongs to the class-II aminoacyl-tRNA synthetase family. As to quaternary structure, homodimer.

It is found in the cytoplasm. It carries out the reaction tRNA(His) + L-histidine + ATP = L-histidyl-tRNA(His) + AMP + diphosphate + H(+). The polypeptide is Histidine--tRNA ligase (Ehrlichia ruminantium (strain Welgevonden)).